The sequence spans 360 residues: Phospho-N-acetylmuramoyl-pentapeptide-transferase (360 aa).

10 helical membrane-spanning segments follow: residues Ala26–Glu46, Met74–Gly94, Tyr97–Tyr117, Tyr134–Asn154, Val168–Ser188, Gly199–Ser219, Ser236–Phe256, Val263–Leu283, Ile288–Val308, and Val338–Lys358.

The protein belongs to the glycosyltransferase 4 family. MraY subfamily. Mg(2+) serves as cofactor.

It localises to the cell inner membrane. The enzyme catalyses UDP-N-acetyl-alpha-D-muramoyl-L-alanyl-gamma-D-glutamyl-meso-2,6-diaminopimeloyl-D-alanyl-D-alanine + di-trans,octa-cis-undecaprenyl phosphate = di-trans,octa-cis-undecaprenyl diphospho-N-acetyl-alpha-D-muramoyl-L-alanyl-D-glutamyl-meso-2,6-diaminopimeloyl-D-alanyl-D-alanine + UMP. Its pathway is cell wall biogenesis; peptidoglycan biosynthesis. Catalyzes the initial step of the lipid cycle reactions in the biosynthesis of the cell wall peptidoglycan: transfers peptidoglycan precursor phospho-MurNAc-pentapeptide from UDP-MurNAc-pentapeptide onto the lipid carrier undecaprenyl phosphate, yielding undecaprenyl-pyrophosphoryl-MurNAc-pentapeptide, known as lipid I. The protein is Phospho-N-acetylmuramoyl-pentapeptide-transferase of Shewanella baltica (strain OS195).